Consider the following 663-residue polypeptide: UvrABC system protein B (663 aa).

In terms of domain architecture, Helicase ATP-binding spans 26–414; the sequence is DGLESGLAKQ…DNVAEQVVRP (389 aa). 39–46 contributes to the ATP binding site; sequence GVTGSGKT. Positions 92 to 115 match the Beta-hairpin motif; it reads YYDYYQPEAYVPASDTFIEKDASI. In terms of domain architecture, Helicase C-terminal spans 430 to 596; the sequence is QVDDLMSEIR…GINKSVEDIL (167 aa). The UVR domain occupies 624 to 659; sequence VKQINALEKQMYSHAQNMEFELAAKIRDEYLLLKEQ.

It belongs to the UvrB family. In terms of assembly, forms a heterotetramer with UvrA during the search for lesions. Interacts with UvrC in an incision complex.

Its subcellular location is the cytoplasm. Its function is as follows. The UvrABC repair system catalyzes the recognition and processing of DNA lesions. A damage recognition complex composed of 2 UvrA and 2 UvrB subunits scans DNA for abnormalities. Upon binding of the UvrA(2)B(2) complex to a putative damaged site, the DNA wraps around one UvrB monomer. DNA wrap is dependent on ATP binding by UvrB and probably causes local melting of the DNA helix, facilitating insertion of UvrB beta-hairpin between the DNA strands. Then UvrB probes one DNA strand for the presence of a lesion. If a lesion is found the UvrA subunits dissociate and the UvrB-DNA preincision complex is formed. This complex is subsequently bound by UvrC and the second UvrB is released. If no lesion is found, the DNA wraps around the other UvrB subunit that will check the other stand for damage. The chain is UvrABC system protein B from Legionella pneumophila subsp. pneumophila (strain Philadelphia 1 / ATCC 33152 / DSM 7513).